Consider the following 280-residue polypeptide: UPF0276 protein NGO_1946 (280 aa).

It belongs to the UPF0276 family.

This Neisseria gonorrhoeae (strain ATCC 700825 / FA 1090) protein is UPF0276 protein NGO_1946.